A 319-amino-acid polypeptide reads, in one-letter code: Cytochrome c biogenesis protein CcsA (319 aa).

A run of 7 helical transmembrane segments spans residues 9 to 29 (ILTHISFSLVSIGITIFLITL), 44 to 64 (GVIGTFLCITGLLVTRWAYSG), 71 to 91 (LYESLLFLSWSFAIIHMFPYF), 143 to 163 (MVLGYAALLCGSLLSVALLVI), 225 to 245 (IISLGFIFLTIGILSGAVWAN), 259 to 273 (TWAFITWTMFAIYLH), and 286 to 306 (AIVAFLGFIIIWICYFGVNLL).

This sequence belongs to the CcmF/CycK/Ccl1/NrfE/CcsA family. May interact with Ccs1.

The protein localises to the plastid. Its subcellular location is the chloroplast thylakoid membrane. In terms of biological role, required during biogenesis of c-type cytochromes (cytochrome c6 and cytochrome f) at the step of heme attachment. This Oenothera glazioviana (Large-flowered evening primrose) protein is Cytochrome c biogenesis protein CcsA.